The sequence spans 90 residues: Small ribosomal subunit protein uS15 (90 aa).

The protein belongs to the universal ribosomal protein uS15 family. In terms of assembly, part of the 30S ribosomal subunit. Forms a bridge to the 50S subunit in the 70S ribosome, contacting the 23S rRNA.

One of the primary rRNA binding proteins, it binds directly to 16S rRNA where it helps nucleate assembly of the platform of the 30S subunit by binding and bridging several RNA helices of the 16S rRNA. In terms of biological role, forms an intersubunit bridge (bridge B4) with the 23S rRNA of the 50S subunit in the ribosome. This Campylobacter jejuni subsp. jejuni serotype O:6 (strain 81116 / NCTC 11828) protein is Small ribosomal subunit protein uS15.